We begin with the raw amino-acid sequence, 424 residues long: Tyrosine--tRNA ligase 1 (424 aa).

Tyr-37 contacts L-tyrosine. A 'HIGH' region motif is present at residues 42-51; sequence PTADSLHLGH. The L-tyrosine site is built by Tyr-175 and Gln-179. Positions 235–239 match the 'KMSKS' region motif; that stretch reads KFGKT. Residue Lys-238 coordinates ATP. Positions 357 to 414 constitute an S4 RNA-binding domain; the sequence is ADLQQALVNAGLVPSRGQARTMISSNAVAINGEKQSEPEYLFTDSNRLFDRYTLLRRG.

Belongs to the class-I aminoacyl-tRNA synthetase family. TyrS type 1 subfamily. Homodimer.

Its subcellular location is the cytoplasm. The catalysed reaction is tRNA(Tyr) + L-tyrosine + ATP = L-tyrosyl-tRNA(Tyr) + AMP + diphosphate + H(+). Its function is as follows. Catalyzes the attachment of tyrosine to tRNA(Tyr) in a two-step reaction: tyrosine is first activated by ATP to form Tyr-AMP and then transferred to the acceptor end of tRNA(Tyr). In Photorhabdus laumondii subsp. laumondii (strain DSM 15139 / CIP 105565 / TT01) (Photorhabdus luminescens subsp. laumondii), this protein is Tyrosine--tRNA ligase 1.